We begin with the raw amino-acid sequence, 228 residues long: MKLDEPIIAINFKTYIEATGKRALEIAKAAERVYKETGVTIVVAPQLVDLRMIAENVEIPVFAQHIDPIKPGSHTGHVLPEAVKEAGAVGTLLNHSENRMILADLEAAISRAKEVGLITMVCSNNPAVSAAVAALEPDYVAVEPPELIGTGIPVSKAKPEVITNTVELVRKVNPKVKVLCGAGISTGEDVRKAIELGTVGVLLASGVTKAKDPEKAIRDLVSGIIGKD.

A substrate-binding site is contributed by 11-13 (NFK). The active-site Electrophile is the H95. The active-site Proton acceptor is the E143. Substrate-binding positions include I148, G183, and 204-205 (AS).

Belongs to the triosephosphate isomerase family. As to quaternary structure, homotetramer; dimer of dimers.

It is found in the cytoplasm. The enzyme catalyses D-glyceraldehyde 3-phosphate = dihydroxyacetone phosphate. Its pathway is carbohydrate biosynthesis; gluconeogenesis. The protein operates within carbohydrate degradation; glycolysis; D-glyceraldehyde 3-phosphate from glycerone phosphate: step 1/1. In terms of biological role, involved in the gluconeogenesis. Catalyzes stereospecifically the conversion of dihydroxyacetone phosphate (DHAP) to D-glyceraldehyde-3-phosphate (G3P). The sequence is that of Triosephosphate isomerase from Pyrococcus horikoshii (strain ATCC 700860 / DSM 12428 / JCM 9974 / NBRC 100139 / OT-3).